Consider the following 465-residue polypeptide: Argininosuccinate lyase (465 aa).

The protein belongs to the lyase 1 family. Argininosuccinate lyase subfamily.

The protein resides in the cytoplasm. It carries out the reaction 2-(N(omega)-L-arginino)succinate = fumarate + L-arginine. Its pathway is amino-acid biosynthesis; L-arginine biosynthesis; L-arginine from L-ornithine and carbamoyl phosphate: step 3/3. This is Argininosuccinate lyase from Bradyrhizobium diazoefficiens (strain JCM 10833 / BCRC 13528 / IAM 13628 / NBRC 14792 / USDA 110).